Here is a 943-residue protein sequence, read N- to C-terminus: Isoleucine--tRNA ligase (943 aa).

Positions 59–69 (PYANGQIHLGH) match the 'HIGH' region motif. An L-isoleucyl-5'-AMP-binding site is contributed by Glu577. The short motif at 618–622 (KMSKS) is the 'KMSKS' region element. ATP is bound at residue Lys621. 4 residues coordinate Zn(2+): Cys906, Cys909, Cys926, and Cys929.

The protein belongs to the class-I aminoacyl-tRNA synthetase family. IleS type 1 subfamily. Monomer. Zn(2+) serves as cofactor.

The protein localises to the cytoplasm. It carries out the reaction tRNA(Ile) + L-isoleucine + ATP = L-isoleucyl-tRNA(Ile) + AMP + diphosphate. Catalyzes the attachment of isoleucine to tRNA(Ile). As IleRS can inadvertently accommodate and process structurally similar amino acids such as valine, to avoid such errors it has two additional distinct tRNA(Ile)-dependent editing activities. One activity is designated as 'pretransfer' editing and involves the hydrolysis of activated Val-AMP. The other activity is designated 'posttransfer' editing and involves deacylation of mischarged Val-tRNA(Ile). This is Isoleucine--tRNA ligase from Xylella fastidiosa (strain 9a5c).